The primary structure comprises 320 residues: Glucosaminate ammonia-lyase (320 aa).

Position 36-43 (36-43 (TGMQAGGQ)) interacts with FAD. Cysteines 136 and 139 form a disulfide. Position 285–294 (285–294 (DVADHVYRQA)) interacts with FAD.

It belongs to the class-II pyridine nucleotide-disulfide oxidoreductase family.

It catalyses the reaction 2-amino-2-deoxy-D-gluconate = 2-dehydro-3-deoxy-D-gluconate + NH4(+). Catalyzes the conversion of 2-amino-2-deoxy-D-gluconate (GlcNA) to 2-keto-3-deoxy-D-gluconic acid (KDGA) and ammonia. The chain is Glucosaminate ammonia-lyase from Pseudomonas fluorescens.